Reading from the N-terminus, the 468-residue chain is 6-phospho-beta-galactosidase (468 aa).

Gln-19, His-116, Asn-159, Glu-160, and Asn-297 together coordinate D-galactose 6-phosphate. Glu-160 serves as the catalytic Proton donor. Glu-375 (nucleophile) is an active-site residue. Positions 428, 429, 435, and 437 each coordinate D-galactose 6-phosphate.

This sequence belongs to the glycosyl hydrolase 1 family.

It carries out the reaction a 6-phospho-beta-D-galactoside + H2O = D-galactose 6-phosphate + an alcohol. The protein operates within carbohydrate metabolism; lactose degradation; D-galactose 6-phosphate and beta-D-glucose from lactose 6-phosphate: step 1/1. This chain is 6-phospho-beta-galactosidase, found in Streptococcus pyogenes serotype M28 (strain MGAS6180).